Consider the following 318-residue polypeptide: Ficolin-1-B (318 aa).

A signal peptide spans 1–19 (MTRWVQTFLLLVAVIRSYA). Positions 42–99 (GCPGIPGVPGPQGPSGPAGAKGEKGFPGIPGKMGPTGLKGERGISGPKGQKGDKGDPG) constitute a Collagen-like domain. Positions 100 to 318 (IPVVGMAQNC…VSEIKFRPQP (219 aa)) constitute a Fibrinogen C-terminal domain. Cys109 and Cys137 are oxidised to a cystine. N-linked (GlcNAc...) asparagine glycans are attached at residues Asn205 and Asn222. Residue Asp253 coordinates Ca(2+). Asn254 carries N-linked (GlcNAc...) asparagine glycosylation. 2 residues coordinate Ca(2+): Asp255 and Ser257. Cys261 and Cys274 are disulfide-bonded. 273–275 (SCH) is an a carbohydrate binding site. Asn287 carries N-linked (GlcNAc...) asparagine glycosylation.

The protein belongs to the ficolin lectin family. As to quaternary structure, homotrimer. May form higher-order oligomers. In terms of processing, N-glycosylated. Expressed in peripheral blood leukocytes. Also detected at lower levels in spleen and lung.

The protein localises to the secreted. Functionally, may function in innate immunity through activation of the lectin complement pathway. Binds to GalNAc and GlcNAc carbohydrate moieties. The protein is Ficolin-1-B of Xenopus laevis (African clawed frog).